The sequence spans 321 residues: MIISAYIMPLRLPKPGLRNIDGHLLYLEHAGPHMATLQIVNNVLSSEMTSAGQLVETVDLELFGKSLFIEHIIMITLYDEYIYHETLVHPTLLSLENPEKVLIIGGGDGGALREVLKHPVGEVTLVELDKSVIETVKKHIPEVPGGSFEDPRLKLIIGDGRKYVESCEEKYDAVILDLTDPYGQAVRLYTKEFYSMVRKLIRDGGLMVTHSEGVHVNRVTFQRIYRAIRETFKRHAVAKAYVPSFNDEWSFSFGSDYLVPPELDREKLERRFNERLKGKTRFYLPEIHYALFSLPAYLKAALEEEVPPSTDDNPAEIYEES.

Positions 23 to 256 (HLLYLEHAGP…DEWSFSFGSD (234 aa)) constitute a PABS domain. S-methyl-5'-thioadenosine is bound at residue Gln53. Spermidine is bound by residues His84 and Asp108. Residues Glu127 and 159–160 (DG) each bind S-methyl-5'-thioadenosine. Asp177 acts as the Proton acceptor in catalysis.

This sequence belongs to the spermidine/spermine synthase family. Homodimer or homotetramer.

The protein resides in the cytoplasm. The catalysed reaction is S-adenosyl 3-(methylsulfanyl)propylamine + putrescine = S-methyl-5'-thioadenosine + spermidine + H(+). It participates in amine and polyamine biosynthesis; spermidine biosynthesis; spermidine from putrescine: step 1/1. Functionally, catalyzes the irreversible transfer of a propylamine group from the amino donor S-adenosylmethioninamine (decarboxy-AdoMet) to putrescine (1,4-diaminobutane) to yield spermidine. In Korarchaeum cryptofilum (strain OPF8), this protein is Polyamine aminopropyltransferase.